Here is an 86-residue protein sequence, read N- to C-terminus: Small ribosomal subunit protein bS16 (86 aa).

The protein belongs to the bacterial ribosomal protein bS16 family.

The protein is Small ribosomal subunit protein bS16 of Borrelia garinii subsp. bavariensis (strain ATCC BAA-2496 / DSM 23469 / PBi) (Borreliella bavariensis).